Consider the following 295-residue polypeptide: 4-hydroxy-3-methylbut-2-enyl diphosphate reductase (295 aa).

Residue Cys-12 participates in [4Fe-4S] cluster binding. Residues His-43 and His-81 each contribute to the (2E)-4-hydroxy-3-methylbut-2-enyl diphosphate site. Dimethylallyl diphosphate contacts are provided by His-43 and His-81. The isopentenyl diphosphate site is built by His-43 and His-81. Residue Cys-103 coordinates [4Fe-4S] cluster. His-131 is a binding site for (2E)-4-hydroxy-3-methylbut-2-enyl diphosphate. Residue His-131 participates in dimethylallyl diphosphate binding. Residue His-131 participates in isopentenyl diphosphate binding. Catalysis depends on Glu-133, which acts as the Proton donor. Thr-171 is a (2E)-4-hydroxy-3-methylbut-2-enyl diphosphate binding site. Residue Cys-199 participates in [4Fe-4S] cluster binding. (2E)-4-hydroxy-3-methylbut-2-enyl diphosphate is bound by residues Ser-227, Asn-229, and Ser-272. Ser-227, Asn-229, and Ser-272 together coordinate dimethylallyl diphosphate. Positions 227, 229, and 272 each coordinate isopentenyl diphosphate.

The protein belongs to the IspH family. Requires [4Fe-4S] cluster as cofactor.

It carries out the reaction isopentenyl diphosphate + 2 oxidized [2Fe-2S]-[ferredoxin] + H2O = (2E)-4-hydroxy-3-methylbut-2-enyl diphosphate + 2 reduced [2Fe-2S]-[ferredoxin] + 2 H(+). The catalysed reaction is dimethylallyl diphosphate + 2 oxidized [2Fe-2S]-[ferredoxin] + H2O = (2E)-4-hydroxy-3-methylbut-2-enyl diphosphate + 2 reduced [2Fe-2S]-[ferredoxin] + 2 H(+). It participates in isoprenoid biosynthesis; dimethylallyl diphosphate biosynthesis; dimethylallyl diphosphate from (2E)-4-hydroxy-3-methylbutenyl diphosphate: step 1/1. Its pathway is isoprenoid biosynthesis; isopentenyl diphosphate biosynthesis via DXP pathway; isopentenyl diphosphate from 1-deoxy-D-xylulose 5-phosphate: step 6/6. Its function is as follows. Catalyzes the conversion of 1-hydroxy-2-methyl-2-(E)-butenyl 4-diphosphate (HMBPP) into a mixture of isopentenyl diphosphate (IPP) and dimethylallyl diphosphate (DMAPP). Acts in the terminal step of the DOXP/MEP pathway for isoprenoid precursor biosynthesis. The polypeptide is 4-hydroxy-3-methylbut-2-enyl diphosphate reductase (Symbiobacterium thermophilum (strain DSM 24528 / JCM 14929 / IAM 14863 / T)).